Here is a 129-residue protein sequence, read N- to C-terminus: MAKAPVRARKRVRKQVSDGVAHVHASFNNTIVTITDRQGNALGWATAGGSGFRGSRKSTPFAAQVAAERCAEAVKDYGIKNLEVMVKGPGPGRESTIRALNAAGFRITNITDVTPIPHNGCRPPKKRRV.

Belongs to the universal ribosomal protein uS11 family. In terms of assembly, part of the 30S ribosomal subunit. Interacts with proteins S7 and S18. Binds to IF-3.

In terms of biological role, located on the platform of the 30S subunit, it bridges several disparate RNA helices of the 16S rRNA. Forms part of the Shine-Dalgarno cleft in the 70S ribosome. This Erwinia tasmaniensis (strain DSM 17950 / CFBP 7177 / CIP 109463 / NCPPB 4357 / Et1/99) protein is Small ribosomal subunit protein uS11.